A 355-amino-acid chain; its full sequence is tRNA uridine(34) hydroxylase (355 aa).

The Rhodanese domain occupies 146–240 (KDPDALFVDM…YVRTAKKKDL (95 aa)). C200 serves as the catalytic Cysteine persulfide intermediate.

Belongs to the TrhO family.

The enzyme catalyses uridine(34) in tRNA + AH2 + O2 = 5-hydroxyuridine(34) in tRNA + A + H2O. Catalyzes oxygen-dependent 5-hydroxyuridine (ho5U) modification at position 34 in tRNAs. In Hamiltonella defensa subsp. Acyrthosiphon pisum (strain 5AT), this protein is tRNA uridine(34) hydroxylase.